A 360-amino-acid polypeptide reads, in one-letter code: Heat-inducible transcription repressor HrcA (360 aa).

Belongs to the HrcA family.

Its function is as follows. Negative regulator of class I heat shock genes (grpE-dnaK-dnaJ and groELS operons). Prevents heat-shock induction of these operons. In Streptococcus thermophilus (strain CNRZ 1066), this protein is Heat-inducible transcription repressor HrcA.